A 403-amino-acid polypeptide reads, in one-letter code: Argininosuccinate synthase (403 aa).

ATP is bound by residues 13 to 21 (AYSGGLDTS) and alanine 40. The L-citrulline site is built by tyrosine 91 and serine 96. Position 121 (glycine 121) interacts with ATP. Residues threonine 123, asparagine 127, and aspartate 128 each contribute to the L-aspartate site. Asparagine 127 is an L-citrulline binding site. The L-citrulline site is built by arginine 131, serine 180, serine 189, glutamate 265, and tyrosine 277.

The protein belongs to the argininosuccinate synthase family. Type 1 subfamily. In terms of assembly, homotetramer.

It is found in the cytoplasm. It carries out the reaction L-citrulline + L-aspartate + ATP = 2-(N(omega)-L-arginino)succinate + AMP + diphosphate + H(+). Its pathway is amino-acid biosynthesis; L-arginine biosynthesis; L-arginine from L-ornithine and carbamoyl phosphate: step 2/3. The protein is Argininosuccinate synthase of Leptospira borgpetersenii serovar Hardjo-bovis (strain JB197).